Consider the following 292-residue polypeptide: Hemin import ATP-binding protein HmuV (292 aa).

Residues 38 to 271 (LRADGIAVTR…ELLTRVYGHP (234 aa)) form the ABC transporter domain. 70-77 (GPNGAGKS) serves as a coordination point for ATP.

The protein belongs to the ABC transporter superfamily. Heme (hemin) importer (TC 3.A.1.14.5) family. The complex is composed of two ATP-binding proteins (HmuV), two transmembrane proteins (HmuU) and a solute-binding protein (HmuT).

Its subcellular location is the cell membrane. In terms of biological role, part of the ABC transporter complex HmuTUV involved in hemin import. Responsible for energy coupling to the transport system. This chain is Hemin import ATP-binding protein HmuV, found in Rhodococcus jostii (strain RHA1).